The sequence spans 448 residues: uncharacterized protein (448 aa).

N6-(pyridoxal phosphate)lysine is present on Lys-297.

It belongs to the class-III pyridoxal-phosphate-dependent aminotransferase family. The cofactor is pyridoxal 5'-phosphate.

This is an uncharacterized protein from Sinorhizobium fredii (strain NBRC 101917 / NGR234).